Reading from the N-terminus, the 599-residue chain is UvrABC system protein C (599 aa).

The GIY-YIG domain maps to 18–96; it reads QLPGVYRMLG…IKQHRPPYNI (79 aa). One can recognise a UVR domain in the interval 207-242; it reads KELNQELIAKMEEAAEQLAFEKAMFYRDRLGLLREV.

The protein belongs to the UvrC family. In terms of assembly, interacts with UvrB in an incision complex.

The protein resides in the cytoplasm. The UvrABC repair system catalyzes the recognition and processing of DNA lesions. UvrC both incises the 5' and 3' sides of the lesion. The N-terminal half is responsible for the 3' incision and the C-terminal half is responsible for the 5' incision. The protein is UvrABC system protein C of Acinetobacter baylyi (strain ATCC 33305 / BD413 / ADP1).